A 305-amino-acid polypeptide reads, in one-letter code: Spermatogenesis-associated protein 4 (305 aa).

In terms of domain architecture, Calponin-homology (CH) spans 49–155 (SRLSRSVLRW…EEVYTLLTHR (107 aa)).

In terms of tissue distribution, highly expressed in testis, the expression is observed precisely in seminiferous tubules.

The protein resides in the nucleus. In terms of biological role, may play a role in apoptosis regulation. The protein is Spermatogenesis-associated protein 4 (SPATA4) of Homo sapiens (Human).